The following is a 360-amino-acid chain: Meiotic drive suppressor wtf13 (360 aa).

Composition is skewed to polar residues over residues 1 to 10 and 58 to 70; these read MKNNYTSLKS and DSST…TNPN. Disordered stretches follow at residues 1 to 20 and 37 to 75; these read MKNN…ELKT and EEEG…ERRQ. Helical transmembrane passes span 90–110, 120–140, 150–170, 186–206, 222–242, 246–266, 276–296, and 310–330; these read LLIS…CVNP, AFSV…FCFF, CIKV…ISLA, DLVV…FGCV, SSIS…IWTL, LFGL…TKGL, ATGY…LFFY, and FIGN…RGIA.

It belongs to the WTF family. In terms of assembly, homomer. Interacts with other proteins that exhibit high sequence similarity.

It is found in the spore membrane. It localises to the vacuole membrane. Functionally, acts as a suppressor component of the dual wtf meiotic drive system, and can suppress but not confer meiotic drive by compatible poisons. Wtf meiotic drive systems promote unequal transmission of alleles from the parental zygote to progeny spores by encoding a poison and an antidote from the same locus; the poison is trans-acting and forms toxic aggregates in all spores within an ascus, wherease the antidote is spore-specific and targets aggregates for degradation by the vacuole. Meiotic drive by wtf systems therefore lead to poisoning of all progeny that do not inherit the dual poison/antidote allele, or express a compatible antidote. The chain is Meiotic drive suppressor wtf13 from Schizosaccharomyces kambucha (Fission yeast).